Reading from the N-terminus, the 90-residue chain is MEIKGCERVLTTHTPPLKTVCFGLALASLINKGCVLTFSLEWQKQICILQRRRGFGYSLANRQVTKRQWTPLGSLWLSIAHLCSSSCCRM.

This is Early nodulin-36A from Glycine max (Soybean).